The chain runs to 106 residues: Flagellar transcriptional regulator FlhD (106 aa).

It belongs to the FlhD family. Homodimer; disulfide-linked. Forms a heterohexamer composed of two FlhC and four FlhD subunits. Each FlhC binds a FlhD dimer, forming a heterotrimer, and a hexamer assembles by dimerization of two heterotrimers.

The protein resides in the cytoplasm. In terms of biological role, functions in complex with FlhC as a master transcriptional regulator that regulates transcription of several flagellar and non-flagellar operons by binding to their promoter region. Activates expression of class 2 flagellar genes, including fliA, which is a flagellum-specific sigma factor that turns on the class 3 genes. Also regulates genes whose products function in a variety of physiological pathways. This chain is Flagellar transcriptional regulator FlhD, found in Burkholderia pseudomallei (strain 1710b).